We begin with the raw amino-acid sequence, 381 residues long: NF-kappa-B inhibitor-like protein 1 (381 aa).

A disordered region spans residues 1-34 (MSNPSPQVPEEEASTSVCRPKSSMASTSRRQRRE). 2 ANK repeats span residues 64–93 (GQPPPLHRACARHDAPALCLLLRLGADPAH) and 97–130 (HGDTALHAAARQGPDAYTDFFLPLLSRCPSAMGI). Disordered regions lie at residues 129-167 (GIKNKDGETPGQILGWGPPWDSAEEEEEDDASKEREWRQ) and 186-294 (GDAS…RGSL). A Phosphoserine modification is found at Ser-150. Residues 150–159 (SAEEEEEDDA) are compositionally biased toward acidic residues. Basic and acidic residues-rich tracts occupy residues 218 to 228 (REAEGSRRPPR) and 238 to 287 (QQEE…EHPR).

Interacts with CACTIN (via N-terminal domain); the interaction occurs in a proinflammatory-independent manner. As to expression, detected in different cell types including monocytes, T-cells, B-cells and hepatocytes.

It localises to the nucleus. Functionally, involved in the regulation of innate immune response. Acts as negative regulator of Toll-like receptor and interferon-regulatory factor (IRF) signaling pathways. Contributes to the negative regulation of transcriptional activation of NF-kappa-B target genes in response to endogenous proinflammatory stimuli. This chain is NF-kappa-B inhibitor-like protein 1 (NFKBIL1), found in Homo sapiens (Human).